The following is a 911-amino-acid chain: Valine--tRNA ligase (911 aa).

The short motif at 53–63 is the 'HIGH' region element; the sequence is PNVTGTLHLGH. Residues 533 to 537 carry the 'KMSKS' region motif; it reads KMSKS. Residue Lys-536 coordinates ATP. The stretch at 845 to 910 forms a coiled coil; it reads KEIERLTKEL…NRLAMLRSMQ (66 aa).

The protein belongs to the class-I aminoacyl-tRNA synthetase family. ValS type 1 subfamily. Monomer.

The protein localises to the cytoplasm. The enzyme catalyses tRNA(Val) + L-valine + ATP = L-valyl-tRNA(Val) + AMP + diphosphate. Catalyzes the attachment of valine to tRNA(Val). As ValRS can inadvertently accommodate and process structurally similar amino acids such as threonine, to avoid such errors, it has a 'posttransfer' editing activity that hydrolyzes mischarged Thr-tRNA(Val) in a tRNA-dependent manner. This chain is Valine--tRNA ligase, found in Symbiobacterium thermophilum (strain DSM 24528 / JCM 14929 / IAM 14863 / T).